The sequence spans 621 residues: Chaperone protein HtpG (621 aa).

An a; substrate-binding region spans residues methionine 1–arginine 341. Residues glutamate 342–asparagine 547 form a b region. The segment at tryptophan 548–leucine 621 is c.

The protein belongs to the heat shock protein 90 family. In terms of assembly, homodimer.

It is found in the cytoplasm. Its function is as follows. Molecular chaperone. Has ATPase activity. This is Chaperone protein HtpG from Helicobacter pylori (strain J99 / ATCC 700824) (Campylobacter pylori J99).